A 528-amino-acid polypeptide reads, in one-letter code: DNA primase large subunit (528 aa).

The H-T-H-like motif stretch occupies residues 210 to 239 (NEEHQRKQYFQQEKFIKLPFENVIELVGNR). 4 residues coordinate [4Fe-4S] cluster: Cys336, Cys417, Cys434, and Cys474.

Belongs to the eukaryotic-type primase large subunit family. DNA polymerase alpha:primase is a four subunit enzyme complex, which is assembled throughout the cell cycle, and consists of the two DNA polymerase subunits A POL1 and B POL12, and the DNA primase large PRI2 and small PRI1 subunits. Interacts with MCM10. [4Fe-4S] cluster is required as a cofactor.

Functionally, DNA primase is the polymerase that synthesizes small RNA primers for the Okazaki fragments made during discontinuous DNA replication. In a complex with DNA polymerase alpha (DNA polymerase alpha:primase) constitutes a replicative polymerase. Both primase components participate in formation of the active center, but the ATP-binding site is exclusively located on p48. The protein is DNA primase large subunit (PRI2) of Saccharomyces cerevisiae (strain ATCC 204508 / S288c) (Baker's yeast).